Consider the following 255-residue polypeptide: uncharacterized protein (255 aa).

Residues isoleucine 13, arginine 37, aspartate 55, asparagine 81, tyrosine 148, lysine 152, valine 180, and threonine 182 each coordinate NADP(+). The active-site Proton donor is tyrosine 148. Catalysis depends on lysine 152, which acts as the Lowers pKa of active site Tyr.

This sequence belongs to the short-chain dehydrogenases/reductases (SDR) family.

In terms of biological role, involved in osmoadaptation. This is an uncharacterized protein from Emericella nidulans (strain FGSC A4 / ATCC 38163 / CBS 112.46 / NRRL 194 / M139) (Aspergillus nidulans).